Reading from the N-terminus, the 444-residue chain is Zinc finger protein ZIC 1 (444 aa).

A C2H2-type 1 zinc finger spans residues 222-257 (LICKWIEPEQLANPKKSCNKTFSTMHELVTHVTVEH). The C2H2-type 2; degenerate zinc-finger motif lies at 271-293 (EECPREGKPFKAKYKLVNHIRVH). 3 C2H2-type zinc fingers span residues 299–323 (FPCPFPGCGKVFARSENLKIHKRTH), 329–353 (FKCEFEGCDRRFANSSDRKKHMHVH), and 359–381 (YLCKMCDKSYTHPSSLRKHMKVH). Residues 372–432 (SSLRKHMKVH…SSAGHHTASH (61 aa)) form a disordered region. Low complexity predominate over residues 383-432 (SSSQGSQPSPAASSGYESSTPPTIVSPSTENQTASSLSPSSSAGHHTASH).

Belongs to the GLI C2H2-type zinc-finger protein family.

The protein localises to the nucleus. It is found in the cytoplasm. Functionally, acts as a transcriptional activator. Involved in neurogenesis. Plays important roles in the early stage of organogenesis of the CNS, as well as during dorsal spinal cord development and maturation of the cerebellum. Binds to the minimal GLI-consensus sequence 5'-TGGGTGGTC-3'. The protein is Zinc finger protein ZIC 1 (ZIC1) of Gallus gallus (Chicken).